A 525-amino-acid polypeptide reads, in one-letter code: Light-independent protochlorophyllide reductase subunit B (525 aa).

Asp36 lines the [4Fe-4S] cluster pocket. The active-site Proton donor is Asp286. Position 421-422 (421-422 (GL)) interacts with substrate.

It belongs to the ChlB/BchB/BchZ family. In terms of assembly, protochlorophyllide reductase is composed of three subunits; ChlL, ChlN and ChlB. Forms a heterotetramer of two ChlB and two ChlN subunits. Requires [4Fe-4S] cluster as cofactor.

The catalysed reaction is chlorophyllide a + oxidized 2[4Fe-4S]-[ferredoxin] + 2 ADP + 2 phosphate = protochlorophyllide a + reduced 2[4Fe-4S]-[ferredoxin] + 2 ATP + 2 H2O. It functions in the pathway porphyrin-containing compound metabolism; chlorophyll biosynthesis (light-independent). Its function is as follows. Component of the dark-operative protochlorophyllide reductase (DPOR) that uses Mg-ATP and reduced ferredoxin to reduce ring D of protochlorophyllide (Pchlide) to form chlorophyllide a (Chlide). This reaction is light-independent. The NB-protein (ChlN-ChlB) is the catalytic component of the complex. The chain is Light-independent protochlorophyllide reductase subunit B from Prochlorococcus marinus (strain NATL2A).